A 650-amino-acid polypeptide reads, in one-letter code: MGILETITGPRDLDRLSREQMVELAAEIRQFLVAEVSKTGGHLGPNLGVVETTLAIHRVFDSPRDAIVFDTGHQSYVHKLVTGRQDFSRLREAGGLAGYPQRSESEHDIVESSHASSSLSWADGISRAFGITGQTDRHVVAVVGDGALTGGMTWEALNNISDDNTRKLIIVVNDNGRSYAPTIGGMARFLNTVRTRRTYRGLYETSQRVFGVFGAPGDSLYRGLRGGLHGFLTRVTDNEALYSNLDIKYLGPIDGHDQQAMEEALEQARDYGAPVIVHAITEKGRGYEPARRDVADQFHAVGQIDPETGEPIDPSHAVSWTSVFADEILALADEDPRIVGITAAMLRPVGLHKFAEKHPDRVHDVGIAEQHAVTSAAGLAYGGLHPVVALYATFVNRAFDQVLMDVALHRAGVTFVLDRAGVTGPDGPSHHGMWDLALLQIVPHIRLSAPRDATRLREELGEAVKVDDAPTVVRFSKGSVGDEIEAVRRLDDGVDVLHESASKDVLIVTVGPMATMGIEVAERLAAQGIGATVVDPRWVVPVPRSVVELGGTHRLVVTIEDGVVVGGIGTRIRQDLREAGIDTGVTELGLPDEFLDHGTRSQILERVGLTPQHIARDVVAQVLGSRVPSARPLPEDAERVPMRAEDDEQA.

Thiamine diphosphate contacts are provided by residues H73 and 113–115; that span reads SHA. D145 lines the Mg(2+) pocket. Thiamine diphosphate contacts are provided by residues 146–147, N175, Y287, and E369; that span reads GA. N175 contacts Mg(2+). Positions 629-650 are disordered; the sequence is SARPLPEDAERVPMRAEDDEQA. The span at 633–644 shows a compositional bias: basic and acidic residues; it reads LPEDAERVPMRA.

Belongs to the transketolase family. DXPS subfamily. As to quaternary structure, homodimer. The cofactor is Mg(2+). Thiamine diphosphate is required as a cofactor.

The enzyme catalyses D-glyceraldehyde 3-phosphate + pyruvate + H(+) = 1-deoxy-D-xylulose 5-phosphate + CO2. Its pathway is metabolic intermediate biosynthesis; 1-deoxy-D-xylulose 5-phosphate biosynthesis; 1-deoxy-D-xylulose 5-phosphate from D-glyceraldehyde 3-phosphate and pyruvate: step 1/1. Catalyzes the acyloin condensation reaction between C atoms 2 and 3 of pyruvate and glyceraldehyde 3-phosphate to yield 1-deoxy-D-xylulose-5-phosphate (DXP). This chain is 1-deoxy-D-xylulose-5-phosphate synthase, found in Clavibacter sepedonicus (Clavibacter michiganensis subsp. sepedonicus).